A 122-amino-acid chain; its full sequence is Large ribosomal subunit protein uL14 (122 aa).

It belongs to the universal ribosomal protein uL14 family. Part of the 50S ribosomal subunit. Forms a cluster with proteins L3 and L19. In the 70S ribosome, L14 and L19 interact and together make contacts with the 16S rRNA in bridges B5 and B8.

Its function is as follows. Binds to 23S rRNA. Forms part of two intersubunit bridges in the 70S ribosome. The chain is Large ribosomal subunit protein uL14 from Mycobacterium ulcerans (strain Agy99).